The following is a 248-amino-acid chain: mRNA-decapping protein OPG122 (248 aa).

The Nudix hydrolase domain maps to 45-227; the sequence is HKRVSVSAIL…IAKYALDTAK (183 aa). The short motif at 125–147 is the Nudix box element; that stretch reads GGILKRGENVPECLSREIKEEVN. Glutamate 132 is a binding site for Mg(2+). The Nucleophile role is filled by glutamate 141. Glutamate 145 provides a ligand contact to Mn(2+). Residue aspartate 167 participates in Mg(2+) binding.

This sequence belongs to the Nudix hydrolase family. Requires Mg(2+) as cofactor. It depends on Mn(2+) as a cofactor.

It is found in the host mitochondrion. Its function is as follows. Decapping enzyme that remove the protective 5'-cap from both host and viral mRNAs to commit transcripts for decay by the cellular exonuclease XRN1. Preferentially targets spliced mRNAs and since all viral genes are intronless, it preferentially targets host over viral transcripts. Acceleration of the turnover of cellular transcripts promotes the shutoff of host protein synthesis and therefore diminish the magnitude of antiviral response. This is mRNA-decapping protein OPG122 (OPG122) from Variola virus (isolate Human/India/Ind3/1967) (VARV).